The following is a 75-amino-acid chain: Brevinin-2ISc (75 aa).

A signal peptide spans 1-22 (MFTLKKSLLLLFFLGTISLSLC). The propeptide at 23–40 (EEERDADEDEGEMTEEEV) is removed in mature form. An intrachain disulfide couples cysteine 69 to cysteine 75.

In terms of tissue distribution, expressed by the skin glands.

Its subcellular location is the secreted. In terms of biological role, has antimicrobial activity against Gram-negative bacterium E.coli ATCC 8739 (MIC=50 ug) and against Gram positive bacteria S.aureus ATCC 6538 (MIC=25 ug). Has no activity against methicillin-resistant S.aureus ATCC 43300, B.subtilis ATCC 6633 and against fungus C.albicans ATCC 90028. This Odorrana ishikawae (Ishikawa's frog) protein is Brevinin-2ISc.